The following is a 520-amino-acid chain: MNLKQEVESRKTFAIISHPDAGKTTLTEKLLYFSGAIREAGTVKGKKTGKFATSDWMKVEQERGISVTSSVMQFDYDDYKINILDTPGHEDFSEDTYRTLMAVDSAVMVIDCAKGIEPQTLKLFKVCKMRGIPIFTFINKLDRVGKEPFELLDEIEETLNIETYPMNWPIGMGQSFFGIIDRKSKTIEPFRDEENILHLNDDFELEEDHAITNDSAFEQAIEELMLVEEAGEAFDNDALLSGDLTPVFFGSALANFGVQNFLNAYVDFAPMPNARQTKEDVEVSPFDDSFSGFIFKIQANMDPKHRDRIAFMRVVSGAFERGMDVTLQRTNKKQKITRSTSFMADDKETVNHAVAGDIIGLYDTGNYQIGDTLVGGKQTYSFQDLPQFTPEIFMKVSAKNVMKQKHFHKGIEQLVQEGAIQYYKTLHTNQIILGAVGQLQFEVFEHRMKNEYNVDVVMEPVGRKIARWIENEDQITDKMNTSRSILVKDRYDDLVFLFENEFATRWFEEKFLEIKLYSLL.

The region spanning 8–277 is the tr-type G domain; the sequence is ESRKTFAIIS…FAPMPNARQT (270 aa). Residues 17-24, 85-89, and 139-142 each bind GTP; these read SHPDAGKT, DTPGH, and NKLD.

Belongs to the TRAFAC class translation factor GTPase superfamily. Classic translation factor GTPase family. PrfC subfamily.

It is found in the cytoplasm. Its function is as follows. Increases the formation of ribosomal termination complexes and stimulates activities of RF-1 and RF-2. It binds guanine nucleotides and has strong preference for UGA stop codons. It may interact directly with the ribosome. The stimulation of RF-1 and RF-2 is significantly reduced by GTP and GDP, but not by GMP. This chain is Peptide chain release factor 3, found in Staphylococcus aureus (strain JH1).